We begin with the raw amino-acid sequence, 209 residues long: MEPLNPYPVKFSSPKAKVSVVFLSMLLCTGILCVLQLGFLRAKGGDFYSYEVTDAKGRAVALSKYRGKASLVVNVASGCPHAEANYRSLQELHREFGPSHFTVLAFPCNQFGESEPGTNQEIGALAKRNYGVTFPMFSKIKILGSEAEPAYRFLVDSTKKEPRWNFWKYLVDPQGQVVKYWRPDETAESIRPEVASLVRQIIMKKKEEL.

The chain crosses the membrane as a helical span at residues 18–40 (VSVVFLSMLLCTGILCVLQLGFL). The active site involves Cys-79.

The protein belongs to the glutathione peroxidase family.

The protein localises to the membrane. It carries out the reaction 2 glutathione + H2O2 = glutathione disulfide + 2 H2O. The polypeptide is Probable glutathione peroxidase 8-A (gpx8-a) (Xenopus laevis (African clawed frog)).